The sequence spans 447 residues: Dihydrolipoyllysine-residue acetyltransferase component of pyruvate dehydrogenase complex (447 aa).

The region spanning 2 to 78 (PINITMPALS…KVNALIAVLA (77 aa)) is the Lipoyl-binding domain. N6-lipoyllysine is present on Lys-43. The tract at residues 91–140 (GNGAAGAVPAPKPKETAETAPAAAPAPAAAPAPQAAAPASPAPADGEGKR) is disordered. The segment covering 108–134 (ETAPAAAPAPAAAPAPQAAAPASPAPA) has biased composition (low complexity). The Peripheral subunit-binding (PSBD) domain occupies 142-179 (FSSPLARRLAKEAGIDLSAIAGSGPHGRVVKKDVETAV). His-420 is an active-site residue.

It belongs to the 2-oxoacid dehydrogenase family. In terms of assembly, forms a 24-polypeptide structural core with octahedral symmetry. (R)-lipoate is required as a cofactor.

The catalysed reaction is N(6)-[(R)-dihydrolipoyl]-L-lysyl-[protein] + acetyl-CoA = N(6)-[(R)-S(8)-acetyldihydrolipoyl]-L-lysyl-[protein] + CoA. In terms of biological role, the pyruvate dehydrogenase complex catalyzes the overall conversion of pyruvate to acetyl-CoA and CO(2). It contains multiple copies of three enzymatic components: pyruvate dehydrogenase (E1), dihydrolipoamide acetyltransferase (E2) and lipoamide dehydrogenase (E3). The chain is Dihydrolipoyllysine-residue acetyltransferase component of pyruvate dehydrogenase complex (pdhC) from Rhizobium meliloti (strain 1021) (Ensifer meliloti).